Consider the following 559-residue polypeptide: Formate--tetrahydrofolate ligase (559 aa).

Thr68–Thr75 contacts ATP.

It belongs to the formate--tetrahydrofolate ligase family.

The catalysed reaction is (6S)-5,6,7,8-tetrahydrofolate + formate + ATP = (6R)-10-formyltetrahydrofolate + ADP + phosphate. Its pathway is one-carbon metabolism; tetrahydrofolate interconversion. In Rhizobium johnstonii (strain DSM 114642 / LMG 32736 / 3841) (Rhizobium leguminosarum bv. viciae), this protein is Formate--tetrahydrofolate ligase.